Reading from the N-terminus, the 948-residue chain is MDKTYQPHAIETSWYQTWESENYFAPQGVGDSYTIMIPPPNVTGSLHMGHGFNNAIMDALIRFRRMQGRNTLWQPGTDHAGIATQMLVERRLEAQGVSRHELGREKFLDKIWEWKAESGGNISRQIRRLGSSVDWSRERFTMDDGLSEAVKEAFVRLHEDGLIYRGKRLVNWDTKLHTAISDLEVENHDEKGHLWNLRYPLADGAKTAEGLDYLIVATTRPETMLGDAAVAVNPEDERYKALIGKFVELPLVGRRIPIIADDYCDPEFGTGCVKITPAHDFNDYEVGKRHNLPLLNIFDKNANVLPAAQVFNLDGTLNESVDGSLPAAYAGLDRFEARKQIVAAFDAAGLLVSVDDHALKVPKGDRSGTIIEPWLTDQWYVSTKPLAEPAIAAVEDGRIAFVPKQYENMYFSWMRDIQDWCISRQLWWGHRIPAWYDESGKVYVGRDEAEVRAKNNLGPEVALQQDNDVLDTWFSSGLWTFSTLGWPEKTKALKTFHSTDVLVTGFDIIFFWVARMIMLTMHLVKNEDGTPQVPFKTVYVHGLVRDGQGQKMSKSKGNVLDPLDIVDGIDLETLVEKRTSGLMQPQLAKKIEKQTRQEFADGIASYGTDALRFTFCSLASTGRDIKFDMGRVEGYRNFCNKIWNAARYVLDKGEDCGQNGEAVELSLADRWIISQLQRTEAEVTRQLDQFRFDLAAQALYEFIWNQYCDWYLELSKPVLWDETAPVERQRGTRRTLVRVLEVALRLAHPFMPFITEEIWQRLAPLAGAQGKTIMLQPWPVANEARIDQAAEDDIEWLKGLMLAVRNIRGEMNIGPGKPLQLFLKNVSAEDQRRLSENDYLLKKLAKLESMTVLTEGAEAPLSATALVGDMEVLVPMAGLIDKGAELARLDKEIQRLQGEVQRVGGKLSNAAFVDKAPPEVIAKERAKLTEAEQALGKLAEQHARIASL.

Positions P40 to H50 match the 'HIGH' region motif. Residues K551–S555 carry the 'KMSKS' region motif. Residue K554 participates in ATP binding. Residues L879–I945 are a coiled coil.

The protein belongs to the class-I aminoacyl-tRNA synthetase family. ValS type 1 subfamily. As to quaternary structure, monomer.

Its subcellular location is the cytoplasm. The catalysed reaction is tRNA(Val) + L-valine + ATP = L-valyl-tRNA(Val) + AMP + diphosphate. In terms of biological role, catalyzes the attachment of valine to tRNA(Val). As ValRS can inadvertently accommodate and process structurally similar amino acids such as threonine, to avoid such errors, it has a 'posttransfer' editing activity that hydrolyzes mischarged Thr-tRNA(Val) in a tRNA-dependent manner. The sequence is that of Valine--tRNA ligase from Pseudomonas syringae pv. syringae (strain B728a).